Here is a 596-residue protein sequence, read N- to C-terminus: Chaperone protein DnaK (596 aa).

A Phosphothreonine; by autocatalysis modification is found at threonine 180.

This sequence belongs to the heat shock protein 70 family.

Acts as a chaperone. The sequence is that of Chaperone protein DnaK from Thermosipho melanesiensis (strain DSM 12029 / CIP 104789 / BI429).